A 579-amino-acid chain; its full sequence is Probable methyl-accepting chemotaxis protein BT9727_0355 (579 aa).

Topologically, residues 1–13 (MKKYWHKLSFLQK) are cytoplasmic. Residues 14-34 (NVLLTVLVILTLVGTMGALSF) traverse the membrane as a helical segment. Topologically, residues 35-198 (NMFQNSMMSI…ASIVPSTKEK (164 aa)) are extracellular. The helical transmembrane segment at 199 to 219 (FIIQGLMFICISVLIATVIQF) threads the bilayer. At 220–579 (LIVRNALAPL…LQELIGEFKS (360 aa)) the chain is on the cytoplasmic side. The HAMP domain maps to 223–274 (RNALAPLRDLREGLRRVGEGDLNIKLEERSDDIGIINSYFNNTIEKFKGIID). Glu-289 bears the Glutamate methyl ester (Glu) mark. Residues 293-529 (STKENSMAVQ…NIVRVVNELS (237 aa)) enclose the Methyl-accepting transducer domain. Glu-548 bears the Glutamate methyl ester (Glu) mark.

Belongs to the methyl-accepting chemotaxis (MCP) protein family.

It is found in the cell membrane. Its function is as follows. Chemotactic-signal transducers respond to changes in the concentration of attractants and repellents in the environment, transduce a signal from the outside to the inside of the cell, and facilitate sensory adaptation through the variation of the level of methylation. The polypeptide is Probable methyl-accepting chemotaxis protein BT9727_0355 (Bacillus thuringiensis subsp. konkukian (strain 97-27)).